The chain runs to 877 residues: Leucine--tRNA ligase (877 aa).

The 'HIGH' region motif lies at 50-60 (PYPSGKLHMGH). The short motif at 634 to 638 (KMSKS) is the 'KMSKS' region element. An ATP-binding site is contributed by lysine 637.

It belongs to the class-I aminoacyl-tRNA synthetase family.

It is found in the cytoplasm. It carries out the reaction tRNA(Leu) + L-leucine + ATP = L-leucyl-tRNA(Leu) + AMP + diphosphate. This chain is Leucine--tRNA ligase, found in Hydrogenovibrio crunogenus (strain DSM 25203 / XCL-2) (Thiomicrospira crunogena).